A 255-amino-acid chain; its full sequence is Pimeloyl-[acyl-carrier protein] methyl ester esterase (255 aa).

An AB hydrolase-1 domain is found at 16–242 (LVLLHGWGMN…SSHAPFITEP (227 aa)). Substrate contacts are provided by residues tryptophan 22, 82 to 83 (SL), and 143 to 147 (FMALQ). The Nucleophile role is filled by serine 82. Residues aspartate 207 and histidine 235 contribute to the active site. Residue histidine 235 participates in substrate binding.

This sequence belongs to the AB hydrolase superfamily. Carboxylesterase BioH family. As to quaternary structure, monomer.

The protein resides in the cytoplasm. The enzyme catalyses 6-carboxyhexanoyl-[ACP] methyl ester + H2O = 6-carboxyhexanoyl-[ACP] + methanol + H(+). The protein operates within cofactor biosynthesis; biotin biosynthesis. The physiological role of BioH is to remove the methyl group introduced by BioC when the pimeloyl moiety is complete. It allows to synthesize pimeloyl-ACP via the fatty acid synthetic pathway through the hydrolysis of the ester bonds of pimeloyl-ACP esters. The sequence is that of Pimeloyl-[acyl-carrier protein] methyl ester esterase from Vibrio vulnificus (strain YJ016).